A 192-amino-acid polypeptide reads, in one-letter code: Fe/S biogenesis protein NfuA (192 aa).

The [4Fe-4S] cluster site is built by Cys150 and Cys153.

This sequence belongs to the NfuA family. In terms of assembly, homodimer. The cofactor is [4Fe-4S] cluster.

Involved in iron-sulfur cluster biogenesis. Binds a 4Fe-4S cluster, can transfer this cluster to apoproteins, and thereby intervenes in the maturation of Fe/S proteins. Could also act as a scaffold/chaperone for damaged Fe/S proteins. In Vesicomyosocius okutanii subsp. Calyptogena okutanii (strain HA), this protein is Fe/S biogenesis protein NfuA.